Reading from the N-terminus, the 291-residue chain is tRNA dimethylallyltransferase (291 aa).

8-15 (GSTASGKT) serves as a coordination point for ATP. Residue 10 to 15 (TASGKT) participates in substrate binding. Positions 33-36 (DSLC) are interaction with substrate tRNA.

Belongs to the IPP transferase family. Monomer. Requires Mg(2+) as cofactor.

It carries out the reaction adenosine(37) in tRNA + dimethylallyl diphosphate = N(6)-dimethylallyladenosine(37) in tRNA + diphosphate. Its function is as follows. Catalyzes the transfer of a dimethylallyl group onto the adenine at position 37 in tRNAs that read codons beginning with uridine, leading to the formation of N6-(dimethylallyl)adenosine (i(6)A). This chain is tRNA dimethylallyltransferase, found in Aliarcobacter butzleri (strain RM4018) (Arcobacter butzleri).